The sequence spans 267 residues: Tryptophan synthase alpha chain (267 aa).

Catalysis depends on proton acceptor residues Glu51 and Asp62.

Belongs to the TrpA family. In terms of assembly, tetramer of two alpha and two beta chains.

It carries out the reaction (1S,2R)-1-C-(indol-3-yl)glycerol 3-phosphate + L-serine = D-glyceraldehyde 3-phosphate + L-tryptophan + H2O. Its pathway is amino-acid biosynthesis; L-tryptophan biosynthesis; L-tryptophan from chorismate: step 5/5. Functionally, the alpha subunit is responsible for the aldol cleavage of indoleglycerol phosphate to indole and glyceraldehyde 3-phosphate. The sequence is that of Tryptophan synthase alpha chain from Prochlorococcus marinus (strain SARG / CCMP1375 / SS120).